The sequence spans 1342 residues: Subtilisin-like protease 2 (1342 aa).

Residues 1–18 (MLNIIYVVSLILIKFIFY) form the signal peptide. Residues 19-687 (KECNNNNNYY…KLYNNKYSFL (669 aa)) constitute a propeptide, inhibition peptide. Disordered regions lie at residues 85-111 (EKKT…ENEI) and 143-171 (ADVS…NYKN). N-linked (GlcNAc...) asparagine glycosylation is found at asparagine 165, asparagine 343, asparagine 451, asparagine 455, and asparagine 493. Residues 415-474 (KKSKKEKENTQQKGGNNPNVDINILNNNNNNNNNNNNNSNNNSNSMNDEEINYNNNNNKE) form a disordered region. A compositionally biased stretch (low complexity) spans 430 to 474 (NNPNVDINILNNNNNNNNNNNNNSNNNSNSMNDEEINYNNNNNKE). Residues 500-531 (IYHNKNDNSYKNKKEGTGKNNDNNDPNNNNNK) are disordered. Residues 503–516 (NKNDNSYKNKKEGT) show a composition bias toward basic and acidic residues. The span at 518–531 (KNNDNNDPNNNNNK) shows a compositional bias: low complexity. Asparagine 551, asparagine 642, and asparagine 729 each carry an N-linked (GlcNAc...) asparagine glycan. The Extracellular portion of the chain corresponds to 688-1137 (NKFLNIEPLI…LYNLYEYDSH (450 aa)). A Peptidase S8 domain is found at 727 to 1020 (TWNLSIIRVF…DSLVNAEGAV (294 aa)). Catalysis depends on charge relay system residues aspartate 755 and histidine 798. N-linked (GlcNAc...) asparagine glycosylation is found at asparagine 821, asparagine 857, asparagine 893, and asparagine 951. The active-site Charge relay system is the serine 961. Asparagine 1010 and asparagine 1106 each carry an N-linked (GlcNAc...) asparagine glycan. A helical membrane pass occupies residues 1138-1158 (YLLASVILFFLALLSIFVGMI). At 1159–1342 (YMKSRKHSDK…MNQLDDMFMK (184 aa)) the chain is on the cytoplasmic side.

This sequence belongs to the peptidase S8 family. Proteolytically cleaved at the N-terminus to generate a 74kDa intermediate which is further processed into a 72kDa form. The first maturation cleavage is autocatalytic, occurs in the ER and is necessary for the subsequent SUB2 trafficking to the microneme. The second cleavage may be mediated by PMX/plasmepsin X.

It is found in the cell membrane. Its subcellular location is the cytoplasmic vesicle. It localises to the secretory vesicle. The protein resides in the microneme membrane. The catalysed reaction is Hydrolysis of proteins with broad specificity for peptide bonds, and a preference for a large uncharged residue in P1. Hydrolyzes peptide amides.. With respect to regulation, activation may be calcium-dependent. Inhibited by the non-covalent interaction with the cleaved propeptide. In terms of biological role, serine protease which plays an essential role in the shedding of AMA1, MSP1 and MSP7 from the surface of the invading merozoite; this step is essential for productive invasion and the release of the adhesion between the erythrocyte and the merozoite. May cleave TRAMP/PTTRAMP, thereby shedding TRAMP from the merozoite surface during erythrocyte invasion. In Plasmodium falciparum, this protein is Subtilisin-like protease 2.